Consider the following 105-residue polypeptide: Heat shock protein HspQ (105 aa).

Belongs to the HspQ family.

It is found in the cytoplasm. Its function is as follows. Involved in the degradation of certain denaturated proteins, including DnaA, during heat shock stress. The protein is Heat shock protein HspQ of Blochmanniella pennsylvanica (strain BPEN).